The chain runs to 82 residues: Large ribosomal subunit protein bL27c (82 aa).

The segment at 1-22 is disordered; that stretch reads MAHKKGAGSTKNGRDSNSKRLG.

This sequence belongs to the bacterial ribosomal protein bL27 family.

Its subcellular location is the plastid. It localises to the chloroplast. This is Large ribosomal subunit protein bL27c (rpl27) from Chrysotila carterae (Marine alga).